A 237-amino-acid polypeptide reads, in one-letter code: Flagellar L-ring protein (237 aa).

Positions 1 to 16 are cleaved as a signal peptide; that stretch reads MIKRSAVVLMAVILTG. C17 carries N-palmitoyl cysteine lipidation. The S-diacylglycerol cysteine moiety is linked to residue C17. Residues 122–143 form a disordered region; the sequence is PPDSSGDMSTDSNSSSDGKGSV. A compositionally biased stretch (low complexity) spans 124–140; that stretch reads DSSGDMSTDSNSSSDGK.

Belongs to the FlgH family. In terms of assembly, the basal body constitutes a major portion of the flagellar organelle and consists of four rings (L,P,S, and M) mounted on a central rod.

It is found in the cell outer membrane. It localises to the bacterial flagellum basal body. Functionally, assembles around the rod to form the L-ring and probably protects the motor/basal body from shearing forces during rotation. The polypeptide is Flagellar L-ring protein (Allorhizobium ampelinum (strain ATCC BAA-846 / DSM 112012 / S4) (Agrobacterium vitis (strain S4))).